Here is a 360-residue protein sequence, read N- to C-terminus: Phospho-N-acetylmuramoyl-pentapeptide-transferase (360 aa).

10 helical membrane-spanning segments follow: residues 25 to 45 (RAILSVLTALGISLLLGPWVI), 74 to 94 (MGGALILSAMFISTLLWSDFG), 97 to 117 (YVWVVLIVTAIFGAVGWVDDY), 134 to 154 (YFWQSIAGFGAAVFLFCTAQA), 168 to 188 (VALNMGLFYIIFTYFVIVGTS), 199 to 219 (GLAIMPSVMVAGALALIAYLA), 236 to 256 (AGELAVFCCALVGAGLGFLWF), 263 to 283 (VFMGDVGALALGAALGLVAVI), 288 to 308 (FVLFIMGGIFVLETVSVILQV), and 339 to 359 (IVRFWIITLVLVLIGLATLKF).

The protein belongs to the glycosyltransferase 4 family. MraY subfamily. The cofactor is Mg(2+).

The protein resides in the cell inner membrane. The enzyme catalyses UDP-N-acetyl-alpha-D-muramoyl-L-alanyl-gamma-D-glutamyl-meso-2,6-diaminopimeloyl-D-alanyl-D-alanine + di-trans,octa-cis-undecaprenyl phosphate = di-trans,octa-cis-undecaprenyl diphospho-N-acetyl-alpha-D-muramoyl-L-alanyl-D-glutamyl-meso-2,6-diaminopimeloyl-D-alanyl-D-alanine + UMP. It functions in the pathway cell wall biogenesis; peptidoglycan biosynthesis. Catalyzes the initial step of the lipid cycle reactions in the biosynthesis of the cell wall peptidoglycan: transfers peptidoglycan precursor phospho-MurNAc-pentapeptide from UDP-MurNAc-pentapeptide onto the lipid carrier undecaprenyl phosphate, yielding undecaprenyl-pyrophosphoryl-MurNAc-pentapeptide, known as lipid I. The sequence is that of Phospho-N-acetylmuramoyl-pentapeptide-transferase from Cellvibrio japonicus (strain Ueda107) (Pseudomonas fluorescens subsp. cellulosa).